An 803-amino-acid polypeptide reads, in one-letter code: Phosphoribosylformylglycinamidine synthase subunit PurL (803 aa).

Residue H65 is part of the active site. Residues Y68 and K107 each coordinate ATP. Position 109 (E109) interacts with Mg(2+). Substrate is bound by residues 110–113 (SHNH) and R132. H111 serves as the catalytic Proton acceptor. Mg(2+) is bound at residue D133. Residue Q256 participates in substrate binding. D284 provides a ligand contact to Mg(2+). Residue 328-330 (ESQ) coordinates substrate. 2 residues coordinate ATP: N537 and G574. N575 provides a ligand contact to Mg(2+). Residue S577 participates in substrate binding.

Belongs to the FGAMS family. Monomer. Part of the FGAM synthase complex composed of 1 PurL, 1 PurQ and 2 PurS subunits.

Its subcellular location is the cytoplasm. It carries out the reaction N(2)-formyl-N(1)-(5-phospho-beta-D-ribosyl)glycinamide + L-glutamine + ATP + H2O = 2-formamido-N(1)-(5-O-phospho-beta-D-ribosyl)acetamidine + L-glutamate + ADP + phosphate + H(+). It functions in the pathway purine metabolism; IMP biosynthesis via de novo pathway; 5-amino-1-(5-phospho-D-ribosyl)imidazole from N(2)-formyl-N(1)-(5-phospho-D-ribosyl)glycinamide: step 1/2. Functionally, part of the phosphoribosylformylglycinamidine synthase complex involved in the purines biosynthetic pathway. Catalyzes the ATP-dependent conversion of formylglycinamide ribonucleotide (FGAR) and glutamine to yield formylglycinamidine ribonucleotide (FGAM) and glutamate. The FGAM synthase complex is composed of three subunits. PurQ produces an ammonia molecule by converting glutamine to glutamate. PurL transfers the ammonia molecule to FGAR to form FGAM in an ATP-dependent manner. PurS interacts with PurQ and PurL and is thought to assist in the transfer of the ammonia molecule from PurQ to PurL. The polypeptide is Phosphoribosylformylglycinamidine synthase subunit PurL (Prochlorococcus marinus (strain NATL2A)).